An 869-amino-acid polypeptide reads, in one-letter code: Facilitated trehalose transporter Tret1 (869 aa).

2 disordered regions span residues 1-214 (MSGR…QKAT) and 258-315 (KESS…LIHR). Residues 1–404 (MSGRDNRGAG…VYRPTTNPIY (404 aa)) lie on the Cytoplasmic side of the membrane. Positions 25–43 (KLKEKLTRAGDDQGYHRVE) are enriched in basic and acidic residues. Composition is skewed to low complexity over residues 44–57 (SNLS…SLDT), 79–92 (PQQQ…QQLR), and 118–127 (PFQQQQQRTP). 2 stretches are compositionally biased toward basic and acidic residues: residues 147–156 (EIREHRDRQQ) and 258–291 (KESS…KLDK). A phosphoserine mark is found at Ser260, Ser261, Ser262, Ser332, and Ser334. Residues 336-368 (EDFHTSRQHFQQQRSISTDSRKSRRPYEMDEMG) form a disordered region. Over residues 343-353 (QHFQQQRSIST) the composition is skewed to polar residues. The segment covering 354–368 (DSRKSRRPYEMDEMG) has biased composition (basic and acidic residues). Residues 405 to 425 (IWTQVLAALSVSLGSLVVGFV) traverse the membrane as a helical segment. Topologically, residues 426-452 (SAYTSPALVSMTNRNMTSFEVTPQAAS) are extracellular. Asn440 is a glycosylation site (N-linked (GlcNAc...) asparagine). A helical transmembrane segment spans residues 453-473 (WVGGIMPLAGLAGGIAGGPFI). Residues 474–485 (EYLGRRNTILAT) are Cytoplasmic-facing. Residues 486 to 506 (AIPFIVSSLLIACAVNVAMVL) traverse the membrane as a helical segment. Topologically, residues 507 to 509 (AGR) are extracellular. A helical transmembrane segment spans residues 510-530 (FLAGFCVGIASLSLPVYLGET). Residues 531–536 (VQPEVR) lie on the Cytoplasmic side of the membrane. Residues 537-557 (GTLGLLPTAFGNIGILLCFVA) form a helical membrane-spanning segment. Residues 558 to 564 (GTYMDWS) are Extracellular-facing. A helical membrane pass occupies residues 565 to 585 (MLAFLGAALPVPFLILMFLIP). Residues 586–654 (ETPRWFVSRG…NLKPLSISLG (69 aa)) lie on the Cytoplasmic side of the membrane. Residues 655–675 (LMFFQQLSGINAVIFYTVSIF) traverse the membrane as a helical segment. Residues 676 to 685 (KDAGSTIDGN) lie on the Extracellular side of the membrane. The helical transmembrane segment at 686–706 (LCTIIVGIVNFMATFIATLLI) threads the bilayer. Residues 707-712 (DRAGRK) are Cytoplasmic-facing. Residues 713–733 (ILLYVSNIAMIITLFVLGGFF) traverse the membrane as a helical segment. At 734–752 (YCKSHGQDVSQLGWLPLSC) the chain is on the extracellular side. The chain crosses the membrane as a helical span at residues 753 to 773 (FVIYILGFSLGFGPIPWLMMG). Residues 774–779 (EILPSK) are Cytoplasmic-facing. The chain crosses the membrane as a helical span at residues 780–800 (IRGSAASVATAFNWSCTFVVT). Residues 801 to 813 (KTFQDMIDFMGAH) are Extracellular-facing. Residues 814 to 834 (GAFWLFGSICFIGLFFVILYV) traverse the membrane as a helical segment. Residues 835–869 (PETQGKTLEDIERKMMGRVRRMSSVANMKPLAFNM) lie on the Cytoplasmic side of the membrane. 2 positions are modified to phosphoserine: Ser857 and Ser858.

This sequence belongs to the major facilitator superfamily. Sugar transporter (TC 2.A.1.1) family. Trehalose transporter subfamily.

It localises to the cell membrane. Functionally, low-capacity facilitative transporter for trehalose. Does not transport maltose, sucrose or lactose. Mediates the bidirectional transfer of trehalose. Responsible for the transport of trehalose synthesized in the fat body and the incorporation of trehalose into other tissues that require a carbon source, thereby regulating trehalose levels in the hemolymph. The chain is Facilitated trehalose transporter Tret1 from Drosophila persimilis (Fruit fly).